Here is a 1176-residue protein sequence, read N- to C-terminus: Histidine kinase 2 (1176 aa).

The Cytoplasmic portion of the chain corresponds to 1 to 29 (MSITCELLNLTSKKAKKSSSSDKKWLKKP). A helical transmembrane segment spans residues 30-50 (LFFLILCGSLVIVLVMFLRLG). The Extracellular segment spans residues 51–174 (RSQKEETDSC…LEQGLSSYLR (124 aa)). The chain crosses the membrane as a helical span at residues 175-195 (NAWWCLILGVLVCHKIYVSHS). At 196 to 232 (KARGERKEKVHLQEALAPKKQQQRAQTSSRGAGRWRK) the chain is on the cytoplasmic side. The chain crosses the membrane as a helical span at residues 233–253 (NILLLGILGGVSFSVWWFWDT). Residues 254–536 (NEEIIMKRRE…CRFKHKLPIP (283 aa)) lie on the Extracellular side of the membrane. The CHASE domain occupies 302–526 (IPSAIDQRTF…GDPSRNHEMH (225 aa)). Residues 537–557 (WTAITPSILVLVITFLVGYIL) form a helical membrane-spanning segment. Over 558–1176 (YEAINRIATV…TAVARFFEPC (619 aa)) the chain is Cytoplasmic. In terms of domain architecture, Histidine kinase spans 594-867 (TVSHEIRTPM…TFSFTGVFGK (274 aa)). H597 is modified (phosphohistidine; by autocatalysis). Response regulatory domains are found at residues 891-1013 (RALV…QETL) and 1036-1173 (QILV…ARFF). 2 positions are modified to 4-aspartylphosphate: D942 and D1086.

In terms of assembly, self-interacts. Interacts with AHK3, AHP1, AHP2, AHP3, AHP5, ATAF2, AT2S3, BETAA-AD, CYP20-2, DRP1A, HIR1, HIR2, PI4KB1, PI4KG5 and At4g12060. In terms of processing, autophosphorylated predominantly on His residues. Activation probably requires a transfer of a phosphate group between a His in the transmitter domain and an Asp of the receiver domain. In terms of tissue distribution, expressed in roots, leaves and flowers, mostly in the vascular tissues. Present in seedlings.

It is found in the endoplasmic reticulum membrane. It catalyses the reaction ATP + protein L-histidine = ADP + protein N-phospho-L-histidine.. With respect to regulation, activated by cytokinins to initiate phosphorelay signaling. Cytokinins (CK) receptor related to bacterial two-component regulators. Functions as a histidine kinase and transmits the stress signal to a downstream MAPK cascade. This protein undergoes an ATP-dependent autophosphorylation at a conserved histidine residue in the kinase core, and a phosphoryl group is then transferred to a conserved aspartate residue in the receiver domain. In the presence of cytokinin, feeds phosphate to phosphorelay-integrating histidine phosphotransfer protein (HPt) and activates subsequent cascade. Involved in meristems establishment in seedlings. Redundant negative regulator of drought and salt stress responses and abscisic acid (ABA) signaling. Together with AHK3, plays a negative regulatory role in cold stress signaling via inhibition of ABA response, occurring independently of the cold acclimation pathway. Redundant positive regulator of cytokinin signaling that regulates many developmental processes including seed germination, cell division, seed size, chlorophyll retention during leaf senescence, root repression and shoot promotion. Involved in alkamides (e.g. N-isobutyl decanamide) and N-acylethanolamides (NAE) signaling that control meristematic activity and differentiation processes during plant development. Contributes to vascular bundle formation and secondary growth in a cytokinin-dependent manner, probably by promoting the maintenance of mitotic activity and/or identity of procambial cells. Together with AHK4, required for growth and reproduction promotion stimulated by the endophytic fungus Piriformospora indica in a trans-zeatin-dependent manner. Required by the cytokinin-dependent flower development regulation pathway. This is Histidine kinase 2 (AHK2) from Arabidopsis thaliana (Mouse-ear cress).